An 843-amino-acid chain; its full sequence is Protein P (843 aa).

The segment at 1–177 (MPLSYPHFRK…FCGSPYSWEQ (177 aa)) is terminal protein domain (TP). The tract at residues 178-346 (ELQHGSTSLN…YCLSHIINLL (169 aa)) is spacer. Positions 284–308 (EANPSLSTSKRHTSTGNAVELNPVP) are disordered. Residues 347–690 (EDWGPCYEHG…YMNLYPVARQ (344 aa)) form a polymerase/reverse transcriptase domain (RT) region. Residues 357 to 600 (QHHIRTPRTP…YNLHFMGYVI (244 aa)) enclose the Reverse transcriptase domain. Mg(2+)-binding residues include Asp-429, Asp-551, and Asp-552.

This sequence belongs to the hepadnaviridae P protein family.

It carries out the reaction DNA(n) + a 2'-deoxyribonucleoside 5'-triphosphate = DNA(n+1) + diphosphate. The enzyme catalyses Endonucleolytic cleavage to 5'-phosphomonoester.. Its activity is regulated as follows. Activated by host HSP70 and HSP40 in vitro to be able to bind the epsilon loop of the pgRNA. Because deletion of the RNase H region renders the protein partly chaperone-independent, the chaperones may be needed indirectly to relieve occlusion of the RNA-binding site by this domain. Inhibited by several reverse-transcriptase inhibitors: Lamivudine, Adefovir and Entecavir. Multifunctional enzyme that converts the viral RNA genome into dsDNA in viral cytoplasmic capsids. This enzyme displays a DNA polymerase activity that can copy either DNA or RNA templates, and a ribonuclease H (RNase H) activity that cleaves the RNA strand of RNA-DNA heteroduplexes in a partially processive 3'- to 5'-endonucleasic mode. Neo-synthesized pregenomic RNA (pgRNA) are encapsidated together with the P protein, and reverse-transcribed inside the nucleocapsid. Initiation of reverse-transcription occurs first by binding the epsilon loop on the pgRNA genome, and is initiated by protein priming, thereby the 5'-end of (-)DNA is covalently linked to P protein. Partial (+)DNA is synthesized from the (-)DNA template and generates the relaxed circular DNA (RC-DNA) genome. After budding and infection, the RC-DNA migrates in the nucleus, and is converted into a plasmid-like covalently closed circular DNA (cccDNA). The activity of P protein does not seem to be necessary for cccDNA generation, and is presumably released from (+)DNA by host nuclear DNA repair machinery. The protein is Protein P of Homo sapiens (Human).